Reading from the N-terminus, the 267-residue chain is Outer membrane protein assembly factor BamD (267 aa).

An N-terminal signal peptide occupies residues 1-16 (MKKILLTVSLGLALSA). Cys17 is lipidated: N-palmitoyl cysteine. The S-diacylglycerol cysteine moiety is linked to residue Cys17.

The protein belongs to the BamD family. In terms of assembly, part of the Bam complex.

The protein localises to the cell outer membrane. In terms of biological role, part of the outer membrane protein assembly complex, which is involved in assembly and insertion of beta-barrel proteins into the outer membrane. Required for efficient transformation of Neisseria meningitidis by species-related DNA. The sequence is that of Outer membrane protein assembly factor BamD from Neisseria meningitidis serogroup A / serotype 4A (strain DSM 15465 / Z2491).